Reading from the N-terminus, the 468-residue chain is Glutamate--tRNA ligase (468 aa).

The short motif at 8-18 is the 'HIGH' region element; it reads PSPTGFLHVGG. 4 residues coordinate Zn(2+): C97, C99, C124, and D126. Positions 236-240 match the 'KMSKS' region motif; the sequence is KLSKR. K239 contributes to the ATP binding site.

It belongs to the class-I aminoacyl-tRNA synthetase family. Glutamate--tRNA ligase type 1 subfamily. Monomer. Zn(2+) serves as cofactor.

It is found in the cytoplasm. The enzyme catalyses tRNA(Glu) + L-glutamate + ATP = L-glutamyl-tRNA(Glu) + AMP + diphosphate. Catalyzes the attachment of glutamate to tRNA(Glu) in a two-step reaction: glutamate is first activated by ATP to form Glu-AMP and then transferred to the acceptor end of tRNA(Glu). The sequence is that of Glutamate--tRNA ligase from Francisella tularensis subsp. tularensis (strain SCHU S4 / Schu 4).